Consider the following 215-residue polypeptide: Proteasome subunit beta (215 aa).

Residues 1–12 (MLGEIQDKVYKG) constitute a propeptide, removed in mature form; by autocatalysis. Thr-13 functions as the Nucleophile in the catalytic mechanism.

This sequence belongs to the peptidase T1B family. In terms of assembly, the 20S proteasome core is composed of 14 alpha and 14 beta subunits that assemble into four stacked heptameric rings, resulting in a barrel-shaped structure. The two inner rings, each composed of seven catalytic beta subunits, are sandwiched by two outer rings, each composed of seven alpha subunits. The catalytic chamber with the active sites is on the inside of the barrel. Has a gated structure, the ends of the cylinder being occluded by the N-termini of the alpha-subunits. Is capped at one or both ends by the proteasome regulatory ATPase, PAN.

The protein resides in the cytoplasm. It catalyses the reaction Cleavage of peptide bonds with very broad specificity.. The formation of the proteasomal ATPase PAN-20S proteasome complex, via the docking of the C-termini of PAN into the intersubunit pockets in the alpha-rings, triggers opening of the gate for substrate entry. Interconversion between the open-gate and close-gate conformations leads to a dynamic regulation of the 20S proteasome proteolysis activity. Functionally, component of the proteasome core, a large protease complex with broad specificity involved in protein degradation. The chain is Proteasome subunit beta from Archaeoglobus profundus (strain DSM 5631 / JCM 9629 / NBRC 100127 / Av18).